A 507-amino-acid chain; its full sequence is ATP synthase subunit alpha, chloroplastic (507 aa).

ATP is bound at residue 170–177 (GDRQTGKT).

The protein belongs to the ATPase alpha/beta chains family. F-type ATPases have 2 components, CF(1) - the catalytic core - and CF(0) - the membrane proton channel. CF(1) has five subunits: alpha(3), beta(3), gamma(1), delta(1), epsilon(1). CF(0) has four main subunits: a, b, b' and c.

It is found in the plastid. The protein localises to the chloroplast thylakoid membrane. It carries out the reaction ATP + H2O + 4 H(+)(in) = ADP + phosphate + 5 H(+)(out). Functionally, produces ATP from ADP in the presence of a proton gradient across the membrane. The alpha chain is a regulatory subunit. This is ATP synthase subunit alpha, chloroplastic from Silene latifolia (White campion).